The following is a 252-amino-acid chain: uncharacterized protein (252 aa).

The first 22 residues, 1-22, serve as a signal peptide directing secretion; it reads MIHSKRLRLWLYLVLLAVFISA. The N-palmitoyl cysteine moiety is linked to residue Cys-23. Cys-23 is lipidated: S-diacylglycerol cysteine.

Belongs to the staphylococcal tandem lipoprotein family.

The protein localises to the cell membrane. This is an uncharacterized protein from Staphylococcus aureus (strain MW2).